Here is a 188-residue protein sequence, read N- to C-terminus: Probable chemoreceptor glutamine deamidase CheD (188 aa).

Belongs to the CheD family.

The catalysed reaction is L-glutaminyl-[protein] + H2O = L-glutamyl-[protein] + NH4(+). Its function is as follows. Probably deamidates glutamine residues to glutamate on methyl-accepting chemotaxis receptors (MCPs), playing an important role in chemotaxis. This chain is Probable chemoreceptor glutamine deamidase CheD, found in Caulobacter sp. (strain K31).